The following is a 263-amino-acid chain: Acyl-[acyl-carrier-protein]--UDP-N-acetylglucosamine O-acyltransferase (263 aa).

Belongs to the transferase hexapeptide repeat family. LpxA subfamily. As to quaternary structure, homotrimer.

The protein localises to the cytoplasm. It carries out the reaction a (3R)-hydroxyacyl-[ACP] + UDP-N-acetyl-alpha-D-glucosamine = a UDP-3-O-[(3R)-3-hydroxyacyl]-N-acetyl-alpha-D-glucosamine + holo-[ACP]. Its pathway is glycolipid biosynthesis; lipid IV(A) biosynthesis; lipid IV(A) from (3R)-3-hydroxytetradecanoyl-[acyl-carrier-protein] and UDP-N-acetyl-alpha-D-glucosamine: step 1/6. In terms of biological role, involved in the biosynthesis of lipid A, a phosphorylated glycolipid that anchors the lipopolysaccharide to the outer membrane of the cell. The sequence is that of Acyl-[acyl-carrier-protein]--UDP-N-acetylglucosamine O-acyltransferase from Stenotrophomonas maltophilia (strain R551-3).